The following is a 272-amino-acid chain: NH(3)-dependent NAD(+) synthetase (272 aa).

Deamido-NAD(+) is bound at residue Tyr-33. ATP contacts are provided by residues 45–52, Arg-79, and Gln-85; that span reads GISGGQDS. Asp-51 serves as a coordination point for Mg(2+). Position 138 (Arg-138) interacts with deamido-NAD(+). Residue Thr-158 participates in ATP binding. Glu-163 contributes to the Mg(2+) binding site. Deamido-NAD(+) is bound by residues Lys-171 and Asp-178. ATP is bound by residues Lys-187 and Thr-209. Residues Glu-224 and 258-259 contribute to the deamido-NAD(+) site; that span reads HK.

This sequence belongs to the NAD synthetase family. In terms of assembly, homodimer. In terms of processing, phosphorylated during sporulation.

The enzyme catalyses deamido-NAD(+) + NH4(+) + ATP = AMP + diphosphate + NAD(+) + H(+). The protein operates within cofactor biosynthesis; NAD(+) biosynthesis; NAD(+) from deamido-NAD(+) (ammonia route): step 1/1. Its function is as follows. Catalyzes the ATP-dependent amidation of deamido-NAD to form NAD. Uses ammonia as a nitrogen source. The polypeptide is NH(3)-dependent NAD(+) synthetase (Bacillus subtilis (strain 168)).